The sequence spans 456 residues: Riboflavin transporter RibZ (456 aa).

14 helical membrane passes run Trp-5 to Leu-25, Trp-45 to Gly-65, Phe-78 to Ile-98, Ala-105 to Ala-125, Ile-134 to Leu-154, Gly-158 to Ile-178, Ser-192 to Met-212, Leu-220 to Phe-240, Ile-260 to Leu-280, Met-289 to Ala-309, Ile-321 to Ala-341, Ser-343 to Ser-363, Phe-385 to Phe-405, and Gln-428 to Met-448.

The protein belongs to the major facilitator superfamily.

Its subcellular location is the cell membrane. Functionally, transports riboflavin into the cell. This Clostridioides difficile (strain 630) (Peptoclostridium difficile) protein is Riboflavin transporter RibZ.